Reading from the N-terminus, the 447-residue chain is Cytochrome P450 monooxygenase aunB (447 aa).

C386 lines the heme pocket.

Belongs to the cytochrome P450 family. Heme is required as a cofactor.

It catalyses the reaction 2 fonsecin B + NADPH + O2 + H(+) = aurasperone B + NADP(+) + 2 H2O. The enzyme catalyses 2 rubrofusarin B + NADPH + O2 + H(+) = aurasperone A + NADP(+) + 2 H2O. It participates in secondary metabolite biosynthesis. Its function is as follows. Cytochrome P450 monooxygenase; part of the gene cluster that mediates the biosynthesis of aurasperone B, a dimeric gamma-naphthopyrone. The first step in the biosynthesis of aurasperone B is the production of gamma-naphthopyrone precursor YWA1 by the non-reducing polyketide synthase albA, via condensation of one acetyl-CoA starter unit with 6 malonyl-CoA units. YWA1 is then methylated by aunE at position C-6 to yield foncesin which is further methylated at position C-8 by aunD to produce fonsecin B. A key enzyme in the biosynthetic pathway is the cytochrome P450 monooxygenase aunB which catalyzes the oxidative dimerization of fonsecin B to aurasperone B. AunB also catalyzes the oxidative dimerization of rubrofusarin B into aurasperone A. The protein is Cytochrome P450 monooxygenase aunB of Aspergillus niger (strain ATCC MYA-4892 / CBS 513.88 / FGSC A1513).